Here is a 167-residue protein sequence, read N- to C-terminus: uncharacterized protein (167 aa).

Residues Met1–Asp148 form the N-acetyltransferase domain.

It belongs to the acetyltransferase family.

This is an uncharacterized protein from Escherichia coli O157:H7.